The sequence spans 248 residues: Myelin protein P0 (248 aa).

A signal peptide spans 1 to 29 (MAPGAPSSSPSPILAVLLFSSLVLSPAQA). Residues 30–143 (IVVYTDREVH…DIVGKTSQVT (114 aa)) form the Ig-like V-type domain. At 30-153 (IVVYTDREVH…LYVFEKVPTR (124 aa)) the chain is on the extracellular side. The cysteines at positions 50 and 127 are disulfide-linked. Residue N122 is glycosylated (N-linked (GlcNAc...) (complex) asparagine). A helical membrane pass occupies residues 154–179 (YGVVLGAVIGGVLGVVLLLLLLFYVV). Topologically, residues 180–248 (RYCWLRRQAA…GLGESRKDKK (69 aa)) are cytoplasmic. S210 carries the post-translational modification Phosphoserine; by PKC. The interval 224–248 (DHSRSTKAVSEKKAKGLGESRKDKK) is disordered. S226 and S228 each carry phosphoserine. Residues S233 and S243 each carry the phosphoserine; by PKC modification.

The protein belongs to the myelin P0 protein family. Homodimer and homotetramer. N-glycosylated; contains sulfate-substituted glycan. Found only in peripheral nervous system Schwann cells.

Its subcellular location is the cell membrane. The protein localises to the myelin membrane. Functionally, is an adhesion molecule necessary for normal myelination in the peripheral nervous system. It mediates adhesion between adjacent myelin wraps and ultimately drives myelin compaction. This chain is Myelin protein P0 (MPZ), found in Homo sapiens (Human).